Reading from the N-terminus, the 76-residue chain is Conotoxin Cl6.4 (76 aa).

A signal peptide spans 1–19; that stretch reads MTLTFLLVVALCMLTTCHT. Positions 20-47 are excised as a propeptide; the sequence is ENYRDSQKVSPVRSIGKTQFARSLRLSE. 3 disulfide bridges follow: Cys-50–Cys-66, Cys-57–Cys-70, and Cys-65–Cys-75.

Expressed by the venom duct.

Its subcellular location is the secreted. The polypeptide is Conotoxin Cl6.4 (Californiconus californicus (California cone)).